Reading from the N-terminus, the 569-residue chain is Probable protein phosphatase 2C BIPP2C1 (569 aa).

2 disordered regions span residues 166 to 212 (GSSN…SSKV) and 251 to 279 (SLDD…GSSI). Low complexity predominate over residues 174-183 (SEVGVESECG). The 236-residue stretch at 329 to 564 (AAMLPHPSKV…DDVTVVVSVV (236 aa)) folds into the PPM-type phosphatase domain. D358, G359, D488, and D555 together coordinate Mn(2+).

Belongs to the PP2C family. Requires Mg(2+) as cofactor. Mn(2+) is required as a cofactor.

The enzyme catalyses O-phospho-L-seryl-[protein] + H2O = L-seryl-[protein] + phosphate. The catalysed reaction is O-phospho-L-threonyl-[protein] + H2O = L-threonyl-[protein] + phosphate. In terms of biological role, may play a role in responses to biotic and abiotic stresses. This Oryza sativa subsp. indica (Rice) protein is Probable protein phosphatase 2C BIPP2C1 (BIPP2C1).